We begin with the raw amino-acid sequence, 543 residues long: Peptide chain release factor 3 (543 aa).

The tr-type G domain maps to 21-289 (KKRRTFAIIS…ALSDWAPSPL (269 aa)). GTP contacts are provided by residues 30-37 (SHPDAGKT), 98-102 (DTPGH), and 152-155 (NKLD).

This sequence belongs to the TRAFAC class translation factor GTPase superfamily. Classic translation factor GTPase family. PrfC subfamily.

It is found in the cytoplasm. Increases the formation of ribosomal termination complexes and stimulates activities of RF-1 and RF-2. It binds guanine nucleotides and has strong preference for UGA stop codons. It may interact directly with the ribosome. The stimulation of RF-1 and RF-2 is significantly reduced by GTP and GDP, but not by GMP. The polypeptide is Peptide chain release factor 3 (Thiobacillus denitrificans (strain ATCC 25259 / T1)).